The chain runs to 212 residues: Cytidylate kinase (212 aa).

7-15 (GPAASGKGT) contributes to the ATP binding site.

The protein belongs to the cytidylate kinase family. Type 1 subfamily.

Its subcellular location is the cytoplasm. The enzyme catalyses CMP + ATP = CDP + ADP. The catalysed reaction is dCMP + ATP = dCDP + ADP. In Rhodopseudomonas palustris (strain BisB18), this protein is Cytidylate kinase.